Reading from the N-terminus, the 306-residue chain is Mitochondrial brown fat uncoupling protein 1 (306 aa).

Residues methionine 1–proline 10 lie on the Mitochondrial intermembrane side of the membrane. The chain crosses the membrane as a helical span at residues proline 11–phenylalanine 32. 3 Solcar repeats span residues proline 11–phenylalanine 102, proline 110–alanine 200, and aspartate 209–glutamate 294. Residues proline 33 to lysine 73 are Mitochondrial matrix-facing. Lysine 56 contacts fatty acid 16:0. The helical transmembrane segment at leucine 74 to tyrosine 96 threads the bilayer. Over aspartate 97–lysine 115 the chain is Mitochondrial intermembrane. Residues isoleucine 116–proline 132 form a helical membrane-spanning segment. At threonine 133–threonine 177 the chain is on the mitochondrial matrix side. Residues proline 178–tyrosine 194 traverse the membrane as a helical segment. Over aspartate 195–valine 211 the chain is Mitochondrial intermembrane. Residues proline 212–proline 231 form a helical membrane-spanning segment. The Mitochondrial matrix segment spans residues valine 232–alanine 265. A Cysteine sulfenic acid (-SOH) modification is found at cysteine 253. Residues phenylalanine 266–phenylalanine 288 form a helical membrane-spanning segment. Position 268 (lysine 268) interacts with fatty acid 16:0. The Mitochondrial intermembrane portion of the chain corresponds to glutamate 289–threonine 306.

This sequence belongs to the mitochondrial carrier (TC 2.A.29) family. Most probably functions as a monomer. Binds one purine nucleotide per monomer. However, has also been suggested to function as a homodimer or a homotetramer. Tightly associates with cardiolipin in the mitochondrion inner membrane; may stabilize and regulate its activity. May undergo sulfenylation upon cold exposure. May increase the sensitivity of UCP1 thermogenic function to the activation by noradrenaline probably through structural effects. Post-translationally, may undergo ubiquitin-mediated proteasomal degradation. As to expression, brown adipose tissue.

It localises to the mitochondrion inner membrane. It carries out the reaction H(+)(in) = H(+)(out). Its activity is regulated as follows. Has no constitutive proton transporter activity and has to be activated by long-chain fatty acids/LCFAs. Inhibited by purine nucleotides. Both purine nucleotides and LCFAs bind the cytosolic side of the transporter and directly compete to activate or inhibit it. Activated by noradrenaline and reactive oxygen species. Despite lacking canonical translational encoding for selenocysteine, a small pool of the protein has been observed to selectively incorporate selenocysteine at 'Cys-253'. Selenocysteine-modified protein is highly sensitive to redox modification and may constitute a pool of protein highly sensitive to activation by elevated levels of reactive oxygen species (ROS). Functionally, mitochondrial protein responsible for thermogenic respiration, a specialized capacity of brown adipose tissue and beige fat that participates in non-shivering adaptive thermogenesis to temperature and diet variations and more generally to the regulation of energy balance. Functions as a long-chain fatty acid/LCFA and proton symporter, simultaneously transporting one LCFA and one proton through the inner mitochondrial membrane. However, LCFAs remaining associated with the transporter via their hydrophobic tails, it results in an apparent transport of protons activated by LCFAs. Thereby, dissipates the mitochondrial proton gradient and converts the energy of substrate oxydation into heat instead of ATP. Regulates the production of reactive oxygen species/ROS by mitochondria. This Oryctolagus cuniculus (Rabbit) protein is Mitochondrial brown fat uncoupling protein 1.